A 674-amino-acid chain; its full sequence is MTSEAPRVKNKNPAPIQISAEQLLREAVERQDVAFVPPKINITDLEELQEFQGRKRKEFEDAIRRNRLAMGHWMRYGQWELDQKEFARARSVFERALDVDSTYIPLWLKYIECEMKNRNINHARNLFDRAVTQLPRVDKLWYKYVYMEEMLGNITGCRQVFERWLKWEPDENCWMSYIRMERRYHENERARGIYERFVVVHPEVTNWLRWARFEEECGNAANVRQVYLAAIDALGQEFLNERFFIAFAKFEIRQKEYERARTIFKYAIDFMPRSKSMELYKEYTHFEKQFGDHLGVESTVLDKRRLQYEKLLKDSPYDYDTWLDLLKLEESAGDINTIRETYEKAIAKVPEVVEKNAWRRYVYIWLNYCLFEEIDVKDVDRARKVYQEALKLIPHKKFTFAKLWLMYAMFELRQRKIDVARKTLGRALGMCPKPKLFRGYIEFEDAIKQFDRCRILYEKWILYDPEACAPWLGYAALETKLGDSDRARALYNLAVNQPILETPELVWKAYIDFEFEEMEYGKARSIYQQLLRTAPHVKVWISFANFEIAHLEDDDEEPPNEEVASPTAVVRARNVFENALAHLRQQGLKEERVVLLEAWKQFEAMHGTEDTRKHVSSLMPQVVKKRRRLEDGSFEEYLDYLFPDTATDQGDKMRKMLELSRKWKEEMAKKKLEA.

HAT repeat units follow at residues Glu50–Asp82, Lys84–Lys116, Arg118–Met150, Gly152–Arg183, His185–Glu216, Gly218–Arg253, Lys255–Gln289, Thr299–Ser331, Gly333–Asn367, Lys377–Arg413, Arg415–Ala446, Lys448–Lys480, Gly482–Glu516, Met518–Ala549, Thr567–Thr608, and Asp610–Pro643.

The protein belongs to the crooked-neck family. Belongs to the 40S cdc5-associated complex (or cwf complex), a spliceosome sub-complex reminiscent of a late-stage spliceosome composed of the U2, U5 and U6 snRNAs and at least brr2, cdc5, cwf2/prp3, cwf3/syf1, cwf4/syf3, cwf5/ecm2, spp42/cwf6, cwf7/spf27, cwf8, cwf9, cwf10, cwf11, cwf12, prp45/cwf13, cwf14, cwf15, cwf16, cwf17, cwf18, cwf19, cwf20, cwf21, cwf22, cwf23, cwf24, cwf25, cwf26, cyp7/cwf27, cwf28, cwf29/ist3, lea1, msl1, prp5/cwf1, prp10, prp12/sap130, prp17, prp22, sap61, sap62, sap114, sap145, slu7, smb1, smd1, smd3, smf1, smg1 and syf2.

It is found in the nucleus. Involved in pre-mRNA splicing and cell cycle progression. Required for the spliceosome assembly and initiation of the DNA replication. The chain is Pre-mRNA-splicing factor cwf4 (cwf4) from Schizosaccharomyces pombe (strain 972 / ATCC 24843) (Fission yeast).